The following is a 1436-amino-acid chain: DNA-directed RNA polymerase subunit beta (1436 aa).

This sequence belongs to the RNA polymerase beta chain family. As to quaternary structure, the RNAP catalytic core consists of 2 alpha, 1 beta, 1 beta' and 1 omega subunit. When a sigma factor is associated with the core the holoenzyme is formed, which can initiate transcription.

The enzyme catalyses RNA(n) + a ribonucleoside 5'-triphosphate = RNA(n+1) + diphosphate. Its function is as follows. DNA-dependent RNA polymerase catalyzes the transcription of DNA into RNA using the four ribonucleoside triphosphates as substrates. This Wolbachia pipientis protein is DNA-directed RNA polymerase subunit beta.